Here is a 320-residue protein sequence, read N- to C-terminus: Malate dehydrogenase (320 aa).

NAD(+)-binding positions include 10 to 15 (GAGNIG) and D34. 2 residues coordinate substrate: R83 and R89. NAD(+) contacts are provided by residues N96 and 119–121 (ITN). N121 and R152 together coordinate substrate. H176 (proton acceptor) is an active-site residue.

Belongs to the LDH/MDH superfamily. MDH type 3 family.

It carries out the reaction (S)-malate + NAD(+) = oxaloacetate + NADH + H(+). Its function is as follows. Catalyzes the reversible oxidation of malate to oxaloacetate. The polypeptide is Malate dehydrogenase (Novosphingobium aromaticivorans (strain ATCC 700278 / DSM 12444 / CCUG 56034 / CIP 105152 / NBRC 16084 / F199)).